Here is a 377-residue protein sequence, read N- to C-terminus: GDP-mannose 3,5-epimerase (377 aa).

Residue Gly2 is modified to N-acetylglycine. NAD(+) contacts are provided by residues 34 to 60 (GAGG…SDWK), Asp58, and Asp78. Substrate contacts are provided by residues Gly103 and 143–145 (SAC). NAD(+) is bound by residues Tyr174 and Lys178. The active-site Proton acceptor is Tyr174. Substrate-binding positions include Asn203, 216 to 218 (EKA), Lys225, 241 to 243 (QTR), Arg306, and Ser356. The residue at position 369 (Ser369) is a Phosphoserine.

Belongs to the NAD(P)-dependent epimerase/dehydratase family. As to quaternary structure, homodimer. Interacts with chaperone Hsc70-3 protein, which may regulate epimerase activity. NAD(+) is required as a cofactor.

It catalyses the reaction GDP-alpha-D-mannose = GDP-beta-L-gulose. The catalysed reaction is GDP-beta-L-gulose = GDP-beta-L-galactose. Its pathway is cofactor biosynthesis; L-ascorbate biosynthesis via GDP-alpha-D-mannose pathway; L-ascorbate from GDP-alpha-D-mannose: step 1/5. Its activity is regulated as follows. Inhibited by GDP and GDP-D-glucose. Functionally, catalyzes a reversible epimerization of GDP-D-mannose that precedes the committed step in the biosynthesis of vitamin C (L-ascorbate), resulting in the hydrolysis of the highly energetic glycosyl-pyrophosphoryl linkage. Able to catalyze 2 distinct epimerization reactions and can release both GDP-L-galactose and GDP-L-gulose from GDP-mannose. This is GDP-mannose 3,5-epimerase from Arabidopsis thaliana (Mouse-ear cress).